Here is a 155-residue protein sequence, read N- to C-terminus: Small ribosomal subunit protein uS7cz/uS7cy (155 aa).

This sequence belongs to the universal ribosomal protein uS7 family. As to quaternary structure, part of the 30S ribosomal subunit.

It localises to the plastid. The protein resides in the chloroplast. One of the primary rRNA binding proteins, it binds directly to 16S rRNA where it nucleates assembly of the head domain of the 30S subunit. This chain is Small ribosomal subunit protein uS7cz/uS7cy (rps7-A), found in Phalaenopsis aphrodite subsp. formosana (Moth orchid).